We begin with the raw amino-acid sequence, 447 residues long: NADH-quinone oxidoreductase subunit F (447 aa).

Residue 61–70 coordinates NAD(+); it reads GRGGAGFSTG. 174–221 lines the FMN pocket; sequence GAGRYICGEETALINSLEGRRANPRAKPPFPAVFGLWGKPTCVNNVET. Cys352, Cys355, Cys358, and Cys399 together coordinate [4Fe-4S] cluster.

Belongs to the complex I 51 kDa subunit family. In terms of assembly, composed of 13 different subunits. Subunits NuoCD, E, F, and G constitute the peripheral sector of the complex. [4Fe-4S] cluster serves as cofactor. The cofactor is FMN.

It carries out the reaction a quinone + NADH + 5 H(+)(in) = a quinol + NAD(+) + 4 H(+)(out). Functionally, NDH-1 shuttles electrons from NADH, via FMN and iron-sulfur (Fe-S) centers, to quinones in the respiratory chain. Couples the redox reaction to proton translocation (for every two electrons transferred, four hydrogen ions are translocated across the cytoplasmic membrane), and thus conserves the redox energy in a proton gradient. The sequence is that of NADH-quinone oxidoreductase subunit F (nuoF) from Buchnera aphidicola subsp. Schizaphis graminum (strain Sg).